The sequence spans 203 residues: Proteasome subunit beta 2 (203 aa).

Residues Met-1–Ala-9 constitute a propeptide, removed in mature form; by autocatalysis. Residue Thr-10 is the Nucleophile of the active site.

This sequence belongs to the peptidase T1B family. As to quaternary structure, the 20S proteasome core is composed of 14 alpha and 14 beta subunits that assemble into four stacked heptameric rings, resulting in a barrel-shaped structure. The two inner rings, each composed of seven catalytic beta subunits, are sandwiched by two outer rings, each composed of seven alpha subunits. The catalytic chamber with the active sites is on the inside of the barrel. Has a gated structure, the ends of the cylinder being occluded by the N-termini of the alpha-subunits. Is capped at one or both ends by the proteasome regulatory ATPase, PAN.

It localises to the cytoplasm. It catalyses the reaction Cleavage of peptide bonds with very broad specificity.. The formation of the proteasomal ATPase PAN-20S proteasome complex, via the docking of the C-termini of PAN into the intersubunit pockets in the alpha-rings, triggers opening of the gate for substrate entry. Interconversion between the open-gate and close-gate conformations leads to a dynamic regulation of the 20S proteasome proteolysis activity. Its function is as follows. Component of the proteasome core, a large protease complex with broad specificity involved in protein degradation. This chain is Proteasome subunit beta 2, found in Pyrobaculum calidifontis (strain DSM 21063 / JCM 11548 / VA1).